Consider the following 167-residue polypeptide: Cyclic pyranopterin monophosphate synthase 2 (167 aa).

Residues 1-23 (MARASGASDYRSGELSHQDERGA) are disordered. Positions 11 to 23 (RSGELSHQDERGA) are enriched in basic and acidic residues. Residues 86–88 (LCH) and 122–123 (ME) each bind substrate. The active site involves Asp137.

Belongs to the MoaC family. As to quaternary structure, homohexamer; trimer of dimers.

It catalyses the reaction (8S)-3',8-cyclo-7,8-dihydroguanosine 5'-triphosphate = cyclic pyranopterin phosphate + diphosphate. The protein operates within cofactor biosynthesis; molybdopterin biosynthesis. In terms of biological role, catalyzes the conversion of (8S)-3',8-cyclo-7,8-dihydroguanosine 5'-triphosphate to cyclic pyranopterin monophosphate (cPMP). This chain is Cyclic pyranopterin monophosphate synthase 2 (moaC2), found in Mycobacterium bovis (strain ATCC BAA-935 / AF2122/97).